The sequence spans 131 residues: Small ribosomal subunit protein uS11 (131 aa).

The protein belongs to the universal ribosomal protein uS11 family. Part of the 30S ribosomal subunit. Interacts with proteins S7 and S18. Binds to IF-3.

In terms of biological role, located on the platform of the 30S subunit, it bridges several disparate RNA helices of the 16S rRNA. Forms part of the Shine-Dalgarno cleft in the 70S ribosome. This Buchnera aphidicola subsp. Acyrthosiphon pisum (strain 5A) protein is Small ribosomal subunit protein uS11.